The chain runs to 743 residues: Dynein regulatory complex protein 1 homolog (743 aa).

Composition is skewed to acidic residues over residues 1–10 (MDDNEDELEE) and 19–28 (SVEEEEEVEP). Residues 1–34 (MDDNEDELEEHQELVSDGSVEEEEEVEPDLGPVD) are disordered. Coiled coils occupy residues 175-332 (DQIE…VLMN) and 395-416 (KLHS…NNRE). The tract at residues 599-620 (NRLQGAAGGQPDEKEHRSTGDT) is disordered. Positions 715 to 742 (KMRVQYDAEVVFLRRQNEELRHLLQKFT) form a coiled coil.

Belongs to the DRC1 family.

The chain is Dynein regulatory complex protein 1 homolog from Drosophila melanogaster (Fruit fly).